Here is a 940-residue protein sequence, read N- to C-terminus: Isoleucine--tRNA ligase (940 aa).

The 'HIGH' region signature appears at proline 58–histidine 68. Glutamate 564 lines the L-isoleucyl-5'-AMP pocket. The 'KMSKS' region signature appears at lysine 605–serine 609. An ATP-binding site is contributed by lysine 608. Positions 903, 906, 923, and 926 each coordinate Zn(2+).

Belongs to the class-I aminoacyl-tRNA synthetase family. IleS type 1 subfamily. As to quaternary structure, monomer. Zn(2+) serves as cofactor.

It localises to the cytoplasm. The enzyme catalyses tRNA(Ile) + L-isoleucine + ATP = L-isoleucyl-tRNA(Ile) + AMP + diphosphate. Catalyzes the attachment of isoleucine to tRNA(Ile). As IleRS can inadvertently accommodate and process structurally similar amino acids such as valine, to avoid such errors it has two additional distinct tRNA(Ile)-dependent editing activities. One activity is designated as 'pretransfer' editing and involves the hydrolysis of activated Val-AMP. The other activity is designated 'posttransfer' editing and involves deacylation of mischarged Val-tRNA(Ile). In Shewanella halifaxensis (strain HAW-EB4), this protein is Isoleucine--tRNA ligase.